A 413-amino-acid chain; its full sequence is Aspartate aminotransferase, cytoplasmic (413 aa).

Positions 39, 141, and 195 each coordinate L-aspartate. Lys-259 is modified (N6-(pyridoxal phosphate)lysine). L-aspartate is bound at residue Arg-387.

This sequence belongs to the class-I pyridoxal-phosphate-dependent aminotransferase family. As to quaternary structure, homodimer. Pyridoxal 5'-phosphate is required as a cofactor.

Its subcellular location is the cytoplasm. The catalysed reaction is L-aspartate + 2-oxoglutarate = oxaloacetate + L-glutamate. The enzyme catalyses L-cysteine + 2-oxoglutarate = 2-oxo-3-sulfanylpropanoate + L-glutamate. It carries out the reaction (2S)-2-aminobutanoate + 2-oxoglutarate = 2-oxobutanoate + L-glutamate. It catalyses the reaction 3-sulfino-L-alanine + 2-oxoglutarate = 3-sulfinopyruvate + L-glutamate. Biosynthesis of L-glutamate from L-aspartate or L-cysteine. Important regulator of levels of glutamate, the major excitatory neurotransmitter of the vertebrate central nervous system. Acts as a scavenger of glutamate in brain neuroprotection. The aspartate aminotransferase activity is involved in hepatic glucose synthesis during development and in adipocyte glyceroneogenesis. Using L-cysteine as substrate, regulates levels of mercaptopyruvate, an important source of hydrogen sulfide. Mercaptopyruvate is converted into H(2)S via the action of 3-mercaptopyruvate sulfurtransferase (3MST). Hydrogen sulfide is an important synaptic modulator and neuroprotectant in the brain. In Sus scrofa (Pig), this protein is Aspartate aminotransferase, cytoplasmic.